A 1187-amino-acid polypeptide reads, in one-letter code: DENN domain and WD repeat-containing protein SCD1 (1187 aa).

One can recognise a uDENN domain in the interval 19-179 (TVDGDLGFHG…NVPLPTPGKD (161 aa)). One can recognise a cDENN domain in the interval 199–330 (SLPQADISLQ…EFSTLRNDIL (132 aa)). One can recognise a dDENN domain in the interval 332–437 (LLHPNVVAID…ERRLSSDEKS (106 aa)). 2 disordered regions span residues 508–536 (SGALESNGRHPPSSPPGKNTKEDNFSSME) and 765–793 (SAGLPSPRPKDVSVSDETQQPSEASGRSW). Residues 526-536 (NTKEDNFSSME) are compositionally biased toward basic and acidic residues. Residues 779–793 (SDETQQPSEASGRSW) are compositionally biased toward polar residues. 8 WD repeats span residues 841–892 (GHGG…SELR), 897–934 (GHTGTVRAISSDRGKIVSGSDDLSVIVWDKQTTQLLEE), 937–975 (GHDSQVSCVKMLSGERVLTAAHDGTVKMWDVRTDMCVAT), 978–1017 (RCSSAILSLEYDDSTGILAAAGRDTVANIWDIRSGKQMHK), 1020–1057 (GHTKWIRSIRMVEDTLITGSDDWTARVWSVSRGSCDAV), 1060–1099 (CHAGPVQSVEYSPFDKGIITGSADGLLRFWENDEGGIKCV), 1104–1141 (LHSSSILSINAGENWLGIGAADNSMSLFHRPSNAGTKV), and 1152–1187 (RTAAVVRCVASDLERKRICSGGRNGVLRLWDATINI).

As to quaternary structure, interacts with FLS2. As to expression, expressed in roots, rosette and cauline leaves, buds and flowers.

It is found in the cell membrane. Its subcellular location is the cytoplasmic vesicle. The protein localises to the clathrin-coated vesicle. In terms of biological role, involved in growth and development through its role in cytokinesis and polarized cell expansion. Required for plasma membrane internalization. May function in clathrin-mediated membrane trafficking, including plasma membrane endocytosis, essential to both cytokinesis and cell expansion. Acts as a negative regulator of basal resistance against bacteria. In Arabidopsis thaliana (Mouse-ear cress), this protein is DENN domain and WD repeat-containing protein SCD1.